The sequence spans 155 residues: uncharacterized protein (155 aa).

Positions 37-140 constitute an SCP domain; that stretch reads IAELRKKLNL…GGYRLKTTDN (104 aa).

This is an uncharacterized protein from Borreliella burgdorferi (strain ATCC 35210 / DSM 4680 / CIP 102532 / B31) (Borrelia burgdorferi).